The primary structure comprises 333 residues: Protein 2 (333 aa).

2 disordered regions span residues 1 to 41 (MTGR…SENA) and 57 to 84 (LGAG…LPPT). Positions 24 to 33 (QETTKQTTSA) are enriched in polar residues. Positions 62-79 (DYDETEADPADTYGDTEA) are enriched in acidic residues.

The sequence is that of Protein 2 from Lactuca sativa (Garden lettuce).